A 212-amino-acid polypeptide reads, in one-letter code: External core antigen (212 aa).

An N-terminal signal peptide occupies residues 1-19; it reads MQLFPLCLIISCSCPTVQA. Residues 25-27 are HBEAG; it reads GWL. The segment at 165-212 is disordered; that stretch reads NAPILSTLPETTVVRRRGRSPRRRTPSPRRRRSQSPRRRRSQSRESQC. A compositionally biased stretch (basic residues) spans 178-205; sequence VRRRGRSPRRRTPSPRRRRSQSPRRRRS. Residues 184-190 form a 1; half-length repeat; that stretch reads SPRRRTP. Residues 184–206 form a 3 X 8 AA repeats of S-P-R-R-R-R-S-Q region; the sequence is SPRRRTPSPRRRRSQSPRRRRSQ. 2 consecutive repeat copies span residues 191–198 and 199–206.

Belongs to the orthohepadnavirus precore antigen family. As to quaternary structure, homodimerizes. Post-translationally, phosphorylated. Cleaved by host furin.

It localises to the secreted. The protein resides in the host nucleus. Functionally, may regulate immune response to the intracellular capsid in acting as a T-cell tolerogen, by having an immunoregulatory effect which prevents destruction of infected cells by cytotoxic T-cells. This immune regulation may predispose to chronicity during perinatal infections and prevent severe liver injury during adult infections. This chain is External core antigen, found in Hepatitis B virus genotype C subtype ayr (isolate Human/Japan/Okamoto/-) (HBV-C).